The primary structure comprises 106 residues: Putative membrane protein insertion efficiency factor (106 aa).

Belongs to the UPF0161 family.

Its subcellular location is the cell inner membrane. Its function is as follows. Could be involved in insertion of integral membrane proteins into the membrane. This is Putative membrane protein insertion efficiency factor from Methylacidiphilum infernorum (isolate V4) (Methylokorus infernorum (strain V4)).